Consider the following 198-residue polypeptide: Armadillo repeat-containing protein 7 (198 aa).

ARM repeat units lie at residues 57 to 99 (QVLD…HAGG) and 100 to 140 (VPLI…TATP). Residue Ser-169 is modified to Phosphoserine.

As to quaternary structure, component of the minor spliceosome. Within this complex, interacts with RBM48.

Its function is as follows. As a component of the minor spliceosome, involved in the splicing of U12-type introns in pre-mRNAs. This chain is Armadillo repeat-containing protein 7 (ARMC7), found in Homo sapiens (Human).